Reading from the N-terminus, the 371-residue chain is 3-dehydroquinate synthase (371 aa).

Residues 114–118 (GVVGD), 138–139 (TT), lysine 151, lysine 160, and 178–181 (TLNT) each bind NAD(+). Zn(2+) is bound by residues glutamate 193, histidine 258, and histidine 275.

Belongs to the sugar phosphate cyclases superfamily. Dehydroquinate synthase family. It depends on Co(2+) as a cofactor. Zn(2+) serves as cofactor. The cofactor is NAD(+).

It is found in the cytoplasm. The catalysed reaction is 7-phospho-2-dehydro-3-deoxy-D-arabino-heptonate = 3-dehydroquinate + phosphate. The protein operates within metabolic intermediate biosynthesis; chorismate biosynthesis; chorismate from D-erythrose 4-phosphate and phosphoenolpyruvate: step 2/7. In terms of biological role, catalyzes the conversion of 3-deoxy-D-arabino-heptulosonate 7-phosphate (DAHP) to dehydroquinate (DHQ). The chain is 3-dehydroquinate synthase from Synechococcus sp. (strain CC9605).